Here is a 518-residue protein sequence, read N- to C-terminus: Sensor protein kinase HptS (518 aa).

Helical transmembrane passes span 20-40 (IFPV…IYIW) and 222-242 (GITL…FGFI). The Histidine kinase domain maps to 297 to 513 (EQLIHSIEHT…LICYKIPLSR (217 aa)). His325 bears the Phosphohistidine; by autocatalysis mark.

Autophosphorylated.

It localises to the cell membrane. It catalyses the reaction ATP + protein L-histidine = ADP + protein N-phospho-L-histidine.. Functionally, member of the two-component regulatory system HptS/HptR that regulates genes involved in hexose phosphate transport system in response to changes in extracellular phosphate sources. May act as a sensor protein kinase which is autophosphorylated at a histidine residue and transfers its phosphate group to the conserved aspartic acid residue in the regulatory domain of HptS. In turn, HptS antagonizes CcpA-dependent transcription of a subset of CcpA-regulated genes involved in antibiotic susceptibility. This chain is Sensor protein kinase HptS (hptS), found in Staphylococcus aureus (strain MSSA476).